The sequence spans 75 residues: ATP synthase subunit c (75 aa).

2 helical membrane passes run 8 to 28 (FLGI…VSNI) and 54 to 74 (AALT…LIFV).

It belongs to the ATPase C chain family. As to quaternary structure, F-type ATPases have 2 components, F(1) - the catalytic core - and F(0) - the membrane proton channel. F(1) has five subunits: alpha(3), beta(3), gamma(1), delta(1), epsilon(1). F(0) has three main subunits: a(1), b(2) and c(10-14). The alpha and beta chains form an alternating ring which encloses part of the gamma chain. F(1) is attached to F(0) by a central stalk formed by the gamma and epsilon chains, while a peripheral stalk is formed by the delta and b chains.

The protein localises to the cell inner membrane. F(1)F(0) ATP synthase produces ATP from ADP in the presence of a proton or sodium gradient. F-type ATPases consist of two structural domains, F(1) containing the extramembraneous catalytic core and F(0) containing the membrane proton channel, linked together by a central stalk and a peripheral stalk. During catalysis, ATP synthesis in the catalytic domain of F(1) is coupled via a rotary mechanism of the central stalk subunits to proton translocation. In terms of biological role, key component of the F(0) channel; it plays a direct role in translocation across the membrane. A homomeric c-ring of between 10-14 subunits forms the central stalk rotor element with the F(1) delta and epsilon subunits. In Neorickettsia sennetsu (strain ATCC VR-367 / Miyayama) (Ehrlichia sennetsu), this protein is ATP synthase subunit c.